The primary structure comprises 122 residues: UPF0102 protein VV1_0590 (122 aa).

This sequence belongs to the UPF0102 family.

This is UPF0102 protein VV1_0590 from Vibrio vulnificus (strain CMCP6).